The chain runs to 214 residues: 3-isopropylmalate dehydratase small subunit (214 aa).

This sequence belongs to the LeuD family. LeuD type 1 subfamily. As to quaternary structure, heterodimer of LeuC and LeuD.

The enzyme catalyses (2R,3S)-3-isopropylmalate = (2S)-2-isopropylmalate. It participates in amino-acid biosynthesis; L-leucine biosynthesis; L-leucine from 3-methyl-2-oxobutanoate: step 2/4. Functionally, catalyzes the isomerization between 2-isopropylmalate and 3-isopropylmalate, via the formation of 2-isopropylmaleate. The polypeptide is 3-isopropylmalate dehydratase small subunit (Pseudomonas putida (strain GB-1)).